A 729-amino-acid polypeptide reads, in one-letter code: Translation initiation factor IF-2 (729 aa).

Residues 20–141 form a disordered region; it reads QFAGGGRGPG…TTTVRAPVRP (122 aa). The segment covering 22 to 91 has biased composition (gly residues); sequence AGGGRGPGNP…PGGGRGGGRG (70 aa). Basic and acidic residues predominate over residues 92–108; that stretch reads GDGRRRDESFVENEGGR. Over residues 112–127 the composition is skewed to low complexity; sequence SGRTTSTATTARTPGG. The tr-type G domain occupies 229-396; the sequence is PRPPVVTIMG…IILLVADLNE (168 aa). A G1 region spans residues 238–245; sequence GHVDHGKT. Residue 238 to 245 participates in GTP binding; it reads GHVDHGKT. A G2 region spans residues 263–267; the sequence is GITQH. The G3 stretch occupies residues 284-287; it reads DTPG. GTP contacts are provided by residues 284–288 and 338–341; these read DTPGH and NKID. Positions 338–341 are G4; that stretch reads NKID. The interval 374-376 is G5; the sequence is SAK.

The protein belongs to the TRAFAC class translation factor GTPase superfamily. Classic translation factor GTPase family. IF-2 subfamily.

The protein localises to the cytoplasm. One of the essential components for the initiation of protein synthesis. Protects formylmethionyl-tRNA from spontaneous hydrolysis and promotes its binding to the 30S ribosomal subunits. Also involved in the hydrolysis of GTP during the formation of the 70S ribosomal complex. This chain is Translation initiation factor IF-2, found in Roseiflexus sp. (strain RS-1).